The primary structure comprises 127 residues: Large ribosomal subunit protein bL17 (127 aa).

Belongs to the bacterial ribosomal protein bL17 family. In terms of assembly, part of the 50S ribosomal subunit. Contacts protein L32.

The polypeptide is Large ribosomal subunit protein bL17 (Ligilactobacillus salivarius (strain UCC118) (Lactobacillus salivarius)).